A 367-amino-acid chain; its full sequence is Phosphoribosylaminoimidazole-succinocarboxamide synthase (367 aa).

Belongs to the SAICAR synthetase family.

The enzyme catalyses 5-amino-1-(5-phospho-D-ribosyl)imidazole-4-carboxylate + L-aspartate + ATP = (2S)-2-[5-amino-1-(5-phospho-beta-D-ribosyl)imidazole-4-carboxamido]succinate + ADP + phosphate + 2 H(+). It participates in purine metabolism; IMP biosynthesis via de novo pathway; 5-amino-1-(5-phospho-D-ribosyl)imidazole-4-carboxamide from 5-amino-1-(5-phospho-D-ribosyl)imidazole-4-carboxylate: step 1/2. The polypeptide is Phosphoribosylaminoimidazole-succinocarboxamide synthase (Shewanella baltica (strain OS155 / ATCC BAA-1091)).